A 479-amino-acid polypeptide reads, in one-letter code: MSPQTETKASVGFKAGVKEYKLTYYTPEYETKDTDILAAFRVTPQPGVPPEEAGAAVAAESSTGTWTTVWTDGLTSLDRYKGRCYHIEPVPGEETQFIAYVAYPLDLFEEGSVTNMFTSIVGNVFGFKALAALRLEDLRIPPAYTKTFQGPPHGIQVERDKLNKYGRPLLGCTIKPKLGLSAKNYGRAVYECLRGGLDFTKDDENVNSQPFMRWRDRFLFCAEAIYKSQAETGEIKGHYLNATAGTCEEMIKRAVFARELGVPIVMHDYLTGGFTANTSLAHYCRDNGLLLHIHRAMHAVIDRQKNHGMHFRVLAKALRLSGGDHIHAGTVVGKLEGDRESTLGFVDLLRDDYVEKDRSRGIFFTQDWVSLPGVLPVASGGIHVWHMPALTEIFGDDSVLQFGGGTLGHPWGNAPGAVANRVALEACVQARNEGRDLAVEGNEIIREACKWSPELAAACEVWKEIRFNFPTIDKLDGQE.

A propeptide spanning residues 1–2 is cleaved from the precursor; the sequence is MS. Substrate-binding residues include Asn-123 and Thr-173. The Proton acceptor role is filled by Lys-175. Lys-177 contributes to the substrate binding site. 3 residues coordinate Mg(2+): Lys-201, Asp-203, and Glu-204. Residue Lys-201 is modified to N6-carboxylysine. At Ser-208 the chain carries Phosphoserine. His-294 functions as the Proton acceptor in the catalytic mechanism. Positions 295 and 327 each coordinate substrate. Phosphothreonine is present on Thr-330. Substrate is bound at residue Ser-379.

Belongs to the RuBisCO large chain family. Type I subfamily. In terms of assembly, heterohexadecamer of 8 large chains and 8 small chains; disulfide-linked. The disulfide link is formed within the large subunit homodimers. Requires Mg(2+) as cofactor. The disulfide bond which can form in the large chain dimeric partners within the hexadecamer appears to be associated with oxidative stress and protein turnover.

The protein resides in the plastid. Its subcellular location is the chloroplast. The catalysed reaction is 2 (2R)-3-phosphoglycerate + 2 H(+) = D-ribulose 1,5-bisphosphate + CO2 + H2O. It catalyses the reaction D-ribulose 1,5-bisphosphate + O2 = 2-phosphoglycolate + (2R)-3-phosphoglycerate + 2 H(+). Functionally, ruBisCO catalyzes two reactions: the carboxylation of D-ribulose 1,5-bisphosphate, the primary event in carbon dioxide fixation, as well as the oxidative fragmentation of the pentose substrate in the photorespiration process. Both reactions occur simultaneously and in competition at the same active site. The chain is Ribulose bisphosphate carboxylase large chain from Crucihimalaya wallichii (Rock-cress).